Reading from the N-terminus, the 329-residue chain is Pantothenate kinase (329 aa).

The segment at 1-21 (MISPVPSIPRSAHRQRPEATP) is disordered. 107-114 (GSVAVGKS) serves as a coordination point for ATP.

It belongs to the prokaryotic pantothenate kinase family.

The protein localises to the cytoplasm. It catalyses the reaction (R)-pantothenate + ATP = (R)-4'-phosphopantothenate + ADP + H(+). It participates in cofactor biosynthesis; coenzyme A biosynthesis; CoA from (R)-pantothenate: step 1/5. This chain is Pantothenate kinase (coaA), found in Streptomyces coelicolor (strain ATCC BAA-471 / A3(2) / M145).